Here is a 531-residue protein sequence, read N- to C-terminus: RCC1 and BTB domain-containing protein 1 (531 aa).

RCC1 repeat units follow at residues 40-91 (NDEV…LLTT), 93-145 (DGVV…ALAA), 147-198 (GELF…AVLD), 199-250 (SGEV…ALTD), 252-302 (GLLY…AAKT), and 304-356 (GGHV…FLTV). BTB domains are found at residues 370–437 (ADLK…DLPP) and 470–499 (ENAF…INHL).

In terms of tissue distribution, in the retina, mainly expressed in the inner retina with strong signals reaching up to the outer plexiform layer (at protein level).

The protein resides in the nucleus. Its function is as follows. May be involved in cell cycle regulation by chromatin remodeling. This chain is RCC1 and BTB domain-containing protein 1 (Rcbtb1), found in Mus musculus (Mouse).